Here is a 251-residue protein sequence, read N- to C-terminus: Ubiquinone/menaquinone biosynthesis C-methyltransferase UbiE (251 aa).

Residues Thr74, Asp95, 123–124 (NA), and Ser140 each bind S-adenosyl-L-methionine.

This sequence belongs to the class I-like SAM-binding methyltransferase superfamily. MenG/UbiE family.

The enzyme catalyses a 2-demethylmenaquinol + S-adenosyl-L-methionine = a menaquinol + S-adenosyl-L-homocysteine + H(+). It carries out the reaction a 2-methoxy-6-(all-trans-polyprenyl)benzene-1,4-diol + S-adenosyl-L-methionine = a 5-methoxy-2-methyl-3-(all-trans-polyprenyl)benzene-1,4-diol + S-adenosyl-L-homocysteine + H(+). Its pathway is quinol/quinone metabolism; menaquinone biosynthesis; menaquinol from 1,4-dihydroxy-2-naphthoate: step 2/2. The protein operates within cofactor biosynthesis; ubiquinone biosynthesis. Its function is as follows. Methyltransferase required for the conversion of demethylmenaquinol (DMKH2) to menaquinol (MKH2) and the conversion of 2-polyprenyl-6-methoxy-1,4-benzoquinol (DDMQH2) to 2-polyprenyl-3-methyl-6-methoxy-1,4-benzoquinol (DMQH2). This chain is Ubiquinone/menaquinone biosynthesis C-methyltransferase UbiE, found in Citrobacter koseri (strain ATCC BAA-895 / CDC 4225-83 / SGSC4696).